The sequence spans 78 residues: Large ribosomal subunit protein bL28 (78 aa).

The protein belongs to the bacterial ribosomal protein bL28 family.

This Xylella fastidiosa (strain 9a5c) protein is Large ribosomal subunit protein bL28 (rpmB).